A 130-amino-acid chain; its full sequence is Small ribosomal subunit protein uS9 (130 aa).

Residues 109-130 are disordered; that stretch reads RKKERKKYGQPGARAKFQYSKR.

The protein belongs to the universal ribosomal protein uS9 family.

This chain is Small ribosomal subunit protein uS9, found in Maridesulfovibrio salexigens (strain ATCC 14822 / DSM 2638 / NCIMB 8403 / VKM B-1763) (Desulfovibrio salexigens).